Reading from the N-terminus, the 473-residue chain is Probable glucose-6-phosphate 1-dehydrogenase C7.13c (473 aa).

Residues arginine 43, tyrosine 121, and lysine 144 each coordinate NADP(+). Residues lysine 144, 174-178, glutamate 213, and aspartate 232 each bind D-glucose 6-phosphate; that span reads HYTAK. Residue histidine 237 is the Proton acceptor of the active site. Lysine 331 contributes to the D-glucose 6-phosphate binding site. Residue lysine 341 participates in NADP(+) binding. Glutamine 366 contacts D-glucose 6-phosphate.

It belongs to the glucose-6-phosphate dehydrogenase family.

Its subcellular location is the cytoplasm. It catalyses the reaction D-glucose 6-phosphate + NADP(+) = 6-phospho-D-glucono-1,5-lactone + NADPH + H(+). It participates in carbohydrate degradation; pentose phosphate pathway; D-ribulose 5-phosphate from D-glucose 6-phosphate (oxidative stage): step 1/3. Functionally, catalyzes the rate-limiting step of the oxidative pentose-phosphate pathway, which represents a route for the dissimilation of carbohydrates besides glycolysis. The main function of this enzyme is to provide reducing power (NADPH) and pentose phosphates for fatty acid and nucleic acid synthesis. The chain is Probable glucose-6-phosphate 1-dehydrogenase C7.13c from Schizosaccharomyces pombe (strain 972 / ATCC 24843) (Fission yeast).